The primary structure comprises 88 residues: MAVSAKIEIYTWSTCPFCMRALALLKRKGVEFQEYCIDGDNEAREAMAARANGKRSLPQIFIDDQHIGGCDDIYALDGAGKLDPLLHS.

Cysteines 15 and 18 form a disulfide.

It belongs to the glutaredoxin family.

Its function is as follows. Has a glutathione-disulfide oxidoreductase activity in the presence of NADPH and glutathione reductase. Reduces low molecular weight disulfides and proteins. This is Probable glutaredoxin ssr2061 from Synechocystis sp. (strain ATCC 27184 / PCC 6803 / Kazusa).